Reading from the N-terminus, the 86-residue chain is uncharacterized protein (86 aa).

The next 3 membrane-spanning stretches (helical) occupy residues 4–24, 34–54, and 64–84; these read ILIIAEYTLLASLAVFSIAAV, MGLVGISGLNIAIATILILIN, and DIAYALVLLGPVGTIAFARVL.

It to M.jannaschii MJ1223.

The protein localises to the cell membrane. This is an uncharacterized protein from Methanothermobacter thermautotrophicus (strain ATCC 29096 / DSM 1053 / JCM 10044 / NBRC 100330 / Delta H) (Methanobacterium thermoautotrophicum).